Reading from the N-terminus, the 278-residue chain is Large ribosomal subunit protein uL2 (278 aa).

2 disordered regions span residues 33–53 and 221–278; these read LTEG…TSRG and RGVA…KKKR. Positions 269 to 278 are enriched in basic residues; the sequence is IRSRHAKKKR.

Belongs to the universal ribosomal protein uL2 family. In terms of assembly, part of the 50S ribosomal subunit. Forms a bridge to the 30S subunit in the 70S ribosome.

One of the primary rRNA binding proteins. Required for association of the 30S and 50S subunits to form the 70S ribosome, for tRNA binding and peptide bond formation. It has been suggested to have peptidyltransferase activity; this is somewhat controversial. Makes several contacts with the 16S rRNA in the 70S ribosome. The protein is Large ribosomal subunit protein uL2 of Novosphingobium aromaticivorans (strain ATCC 700278 / DSM 12444 / CCUG 56034 / CIP 105152 / NBRC 16084 / F199).